Reading from the N-terminus, the 657-residue chain is Translation factor GUF1, mitochondrial (657 aa).

The N-terminal 39 residues, 1-39 (MRGCLQSVKWLTSALRPSQSLASSTRYPRRLLSTSAPRN), are a transit peptide targeting the mitochondrion. The region spanning 59-239 (ERFRNFCIVA…TVIEQIPAPV (181 aa)) is the tr-type G domain. GTP is bound by residues 109–116 (TVKAQTCS), 173–177 (LAFAE), and 227–230 (LLPT).

Belongs to the TRAFAC class translation factor GTPase superfamily. Classic translation factor GTPase family. LepA subfamily.

It localises to the mitochondrion inner membrane. It carries out the reaction GTP + H2O = GDP + phosphate + H(+). Functionally, promotes mitochondrial protein synthesis. May act as a fidelity factor of the translation reaction, by catalyzing a one-codon backward translocation of tRNAs on improperly translocated ribosomes. Binds to mitochondrial ribosomes in a GTP-dependent manner. This Ajellomyces capsulatus (strain NAm1 / WU24) (Darling's disease fungus) protein is Translation factor GUF1, mitochondrial.